A 191-amino-acid polypeptide reads, in one-letter code: MASTTLSIATTIRSSSYPTLASINHFPSRTTTIEFPSRFGGGSSSTLTHRATHLRPIAAVEAPEKIEKIGSEISSLTLEEARILVDYLQDKFGVSPLSLAPAAAAVAAPADGGAAAVVEEQTEFDVVINEVPSSSRIAVIKAVRALTSLALKEAKELIEGLPKKFKEGITKDEAEEAKKTLEEAGAKVSIA.

The transit peptide at 1 to 58 (MASTTLSIATTIRSSSYPTLASINHFPSRTTTIEFPSRFGGGSSSTLTHRATHLRPIA) directs the protein to the chloroplast.

It belongs to the bacterial ribosomal protein bL12 family.

It localises to the plastid. Its subcellular location is the chloroplast. In Arabidopsis thaliana (Mouse-ear cress), this protein is Large ribosomal subunit protein bL12cz (RPL12A).